Consider the following 481-residue polypeptide: Glutamyl-tRNA(Gln) amidotransferase subunit A (481 aa).

Catalysis depends on charge relay system residues Lys-76 and Ser-151. The Acyl-ester intermediate role is filled by Ser-175.

It belongs to the amidase family. GatA subfamily. Heterotrimer of A, B and C subunits.

The enzyme catalyses L-glutamyl-tRNA(Gln) + L-glutamine + ATP + H2O = L-glutaminyl-tRNA(Gln) + L-glutamate + ADP + phosphate + H(+). Allows the formation of correctly charged Gln-tRNA(Gln) through the transamidation of misacylated Glu-tRNA(Gln) in organisms which lack glutaminyl-tRNA synthetase. The reaction takes place in the presence of glutamine and ATP through an activated gamma-phospho-Glu-tRNA(Gln). The polypeptide is Glutamyl-tRNA(Gln) amidotransferase subunit A (Chlorobaculum tepidum (strain ATCC 49652 / DSM 12025 / NBRC 103806 / TLS) (Chlorobium tepidum)).